We begin with the raw amino-acid sequence, 510 residues long: NAD(P) transhydrogenase subunit alpha (510 aa).

The Cytoplasmic portion of the chain corresponds to 1 to 401 (MRIGIPRERL…EEKCTCSPWR (401 aa)). NAD(+) contacts are provided by residues 120–122 (RIS), valine 175, 195–197 (DTR), glutamate 238, and leucine 257. The next 2 membrane-spanning stretches (helical) occupy residues 402–422 (KYALMALAIILFGWMASVAPK) and 423–443 (EFLGHFTVFALACVVGYYVVW). Residues 444–452 (NVSHALHTP) lie on the Cytoplasmic side of the membrane. Residues 453–473 (LMSVTNAISGIIVVGALLQIG) form a helical membrane-spanning segment. Residues 474–476 (QGG) are Periplasmic-facing. The helical transmembrane segment at 477-497 (WVSFLSFIAVLIASINIFGGF) threads the bilayer. Topologically, residues 498–510 (TVTQRMLKMFRKN) are cytoplasmic.

This sequence belongs to the AlaDH/PNT family. Heterodimer of an alpha (PntA) and a beta (PntB) chain. Alpha subunit serves as the dimerization unit.

It localises to the cell inner membrane. The catalysed reaction is NAD(+) + NADPH + H(+)(in) = NADH + NADP(+) + H(+)(out). Its function is as follows. The transhydrogenation between NADH and NADP is coupled to respiration and ATP hydrolysis and functions as a proton pump across the membrane. The chain is NAD(P) transhydrogenase subunit alpha (pntA) from Escherichia coli (strain K12).